Consider the following 234-residue polypeptide: Adenosine 5'-phosphosulfate reductase (234 aa).

Residues cysteine 120, cysteine 121, cysteine 203, and cysteine 206 each coordinate [4Fe-4S] cluster. Cysteine 229 serves as the catalytic Nucleophile; cysteine thiosulfonate intermediate.

The protein belongs to the PAPS reductase family. CysH subfamily. Requires [4Fe-4S] cluster as cofactor.

It localises to the cytoplasm. It catalyses the reaction [thioredoxin]-disulfide + sulfite + AMP + 2 H(+) = adenosine 5'-phosphosulfate + [thioredoxin]-dithiol. It functions in the pathway sulfur metabolism; hydrogen sulfide biosynthesis; sulfite from sulfate. In terms of biological role, catalyzes the formation of sulfite from adenosine 5'-phosphosulfate (APS) using thioredoxin as an electron donor. The sequence is that of Adenosine 5'-phosphosulfate reductase from Bacillus cereus (strain Q1).